A 509-amino-acid polypeptide reads, in one-letter code: Maturase K (509 aa).

Belongs to the intron maturase 2 family. MatK subfamily.

Its subcellular location is the plastid. It localises to the chloroplast. Functionally, usually encoded in the trnK tRNA gene intron. Probably assists in splicing its own and other chloroplast group II introns. This Hottonia palustris (Water-violet) protein is Maturase K.